The chain runs to 294 residues: Histone deacetylase HDT3 (294 aa).

Position 1 is an N-acetylmethionine (methionine 1). The required to repress transcription stretch occupies residues 2–5 (EFWG). The disordered stretch occupies residues 124–269 (QVNFQLPNED…TPKSAGAFGC (146 aa)). The span at 140–188 (DDADGSEEDSSDDDDSENSGDEEEEKVTAESDSEEDDSSDDEEDDSSEE) shows a compositional bias: acidic residues. The span at 189–202 (ETPKKPEEPKKRSA) shows a compositional bias: basic and acidic residues. Residues 203 to 213 (EPNSSKNPASN) are compositionally biased toward low complexity. Residues 252–262 (GETSKQQQTPK) are compositionally biased toward polar residues. The C2H2-type zinc-finger motif lies at 267–290 (FGCKSCTRTFTSEMGLQSHTKAKH).

This sequence belongs to the histone deacetylase HD2 family. Interacts with DNMT2. As to expression, expressed in leaves, roots, stems, young plantlets, flowers and siliques. Highest levels in ovules, embryos, shoot apical meristems and first leaves. Also expressed in somatic embryos.

Its subcellular location is the nucleus. It localises to the nucleolus. Probably mediates the deacetylation of lysine residues on the N-terminal part of the core histones (H2A, H2B, H3 and H4). Histone deacetylation gives a tag for epigenetic repression and plays an important role in transcriptional regulation, cell cycle progression and developmental events. Involved in the modulation of abscisic acid and stress-responsive genes. The protein is Histone deacetylase HDT3 (HDT3) of Arabidopsis thaliana (Mouse-ear cress).